A 166-amino-acid polypeptide reads, in one-letter code: Phosphopantetheine adenylyltransferase (166 aa).

A substrate-binding site is contributed by S11. Residues 11 to 12 and H19 each bind ATP; that span reads SF. Residues K43, A76, and R90 each contribute to the substrate site. ATP contacts are provided by residues 91-93, E101, and 126-132; these read GLR and MQPISSS.

It belongs to the bacterial CoaD family. In terms of assembly, homohexamer. Requires Mg(2+) as cofactor.

The protein resides in the cytoplasm. The enzyme catalyses (R)-4'-phosphopantetheine + ATP + H(+) = 3'-dephospho-CoA + diphosphate. The protein operates within cofactor biosynthesis; coenzyme A biosynthesis; CoA from (R)-pantothenate: step 4/5. Its function is as follows. Reversibly transfers an adenylyl group from ATP to 4'-phosphopantetheine, yielding dephospho-CoA (dPCoA) and pyrophosphate. This chain is Phosphopantetheine adenylyltransferase, found in Streptococcus uberis (strain ATCC BAA-854 / 0140J).